The following is a 184-amino-acid chain: TRAF-interacting protein with FHA domain-containing protein A (184 aa).

At Thr-9 the chain carries Phosphothreonine. The region spanning Val-47–Leu-103 is the FHA domain. A disordered region spans residues Asn-152 to Leu-184. The segment covering Ser-168–Ser-177 has biased composition (polar residues).

Belongs to the TIFA family. As to quaternary structure, homooligomer; homooligomerizes following phosphorylation at Thr-9. Interacts with IRAK1, TRAF2 and TRAF6. Interacts with TIFAB; binding to TIFAB inhibits TRAF6 activation, possibly by inducing a conformational change in TIFA. Interacts with ZCCHC11; binding to ZCCHC11 suppresses the TRAF6-dependent activation of NF-kappa-B. Post-translationally, phosphorylated at Thr-9 following detection of ADP-D-glycero-beta-D-manno-heptose (ADP-Heptose) by ALPK1. Phosphorylation at Thr-9 by ALPK1 leads to the formation of an intermolecular binding between the FHA domain and phosphorylated Thr-9, promoting TIFA oligomerization and TIFA-mediated NF-kappa-B activation. In terms of tissue distribution, highly expressed in the spleen and at lower levels in heart, brain, lung, liver, kidney and testes.

The protein resides in the cytoplasm. In terms of biological role, adapter molecule that plays a key role in the activation of pro-inflammatory NF-kappa-B signaling following detection of bacterial pathogen-associated molecular pattern metabolites (PAMPs). Promotes activation of an innate immune response by inducing the oligomerization and polyubiquitination of TRAF6, which leads to the activation of TAK1 and IKK through a proteasome-independent mechanism. TIFA-dependent innate immune response is triggered by ADP-D-glycero-beta-D-manno-heptose (ADP-Heptose), a potent PAMP present in all Gram-negative and some Gram-positive bacteria: ADP-Heptose is recognized by ALPK1, which phosphorylates TIFA at Thr-9, leading to TIFA homooligomerization and subsequent activation of pro-inflammatory NF-kappa-B signaling. The protein is TRAF-interacting protein with FHA domain-containing protein A of Mus musculus (Mouse).